The chain runs to 117 residues: uncharacterized protein (117 aa).

This is an uncharacterized protein from Microplitis demolitor bracovirus (isolate Webb) (MdBV).